The following is a 601-amino-acid chain: DNA ligase (601 aa).

Asp258 is an ATP binding site. Lys260 (N6-AMP-lysine intermediate) is an active-site residue. 6 residues coordinate ATP: Arg265, Arg280, Glu310, Phe350, Arg427, and Lys433.

Belongs to the ATP-dependent DNA ligase family. Mg(2+) is required as a cofactor. Ca(2+) serves as cofactor. It depends on Mn(2+) as a cofactor.

The catalysed reaction is ATP + (deoxyribonucleotide)n-3'-hydroxyl + 5'-phospho-(deoxyribonucleotide)m = (deoxyribonucleotide)n+m + AMP + diphosphate.. Its function is as follows. DNA ligase that seals nicks in double-stranded DNA during DNA replication, DNA recombination and DNA repair. Also has low activity with dATP. Inactive with NAD(+), CTP, GTP, UTP, dCTP, dGTP or dTTP. This Saccharolobus shibatae (strain ATCC 51178 / DSM 5389 / JCM 8931 / NBRC 15437 / B12) (Sulfolobus shibatae) protein is DNA ligase.